Here is a 192-residue protein sequence, read N- to C-terminus: Adenylate kinase (192 aa).

ATP is bound at residue 10–18 (GVPGVGSTT).

Belongs to the archaeal adenylate kinase family. Monomer.

It is found in the cytoplasm. It carries out the reaction AMP + ATP = 2 ADP. The sequence is that of Adenylate kinase from Methanococcus vannielii (strain ATCC 35089 / DSM 1224 / JCM 13029 / OCM 148 / SB).